The sequence spans 299 residues: MTNYQHELYFAHCHGHPKKPLEIYMFVDPLCPECWSLEPVIKKLKIRYGRFFTLRIIASASLTALNKKRKKHLLAEAWEKIASRSGMSCDGNVWFEQDQPLSSPYMAALAFKAAELQGRKAGMQFLRNMQESLFVSKKNITDENVLLEIAENTSLDLEEFKKDLHSQSAVKALQCDMKIAAEMDVSVNPTLTFFNTQHEDEGLKVPGSYSYDVYEEILFEMLGDEPKPSETPPLECFIEYFRFVASKEIALVYDLSLEEVEKEMKKLAFAKKVAKVEAKHGMFWKSLSTYSDEYQSCEK.

The protein belongs to the SpxH family. Interacts with Spx. Interacts with SpxO/YuzO.

It localises to the cytoplasm. Its activity is regulated as follows. Irreversible aggregation upon several stress conditions prevents interaction with Spx and therefore leads to Spx stabilization. Inhibited by interaction with SpxO/YuzO. Adapter protein required for efficient degradation of Spx by ClpXP under non-stress conditions. Interaction with Spx stabilizes Spx and exposes the C-terminus of Spx for recognition and proteolysis by ClpXP. Is specific for Spx and does not enhance proteolysis by ClpCP protease. Probably binds 2 zinc ions. The sequence is that of ClpXP adapter protein SpxH from Bacillus subtilis (strain 168).